The sequence spans 440 residues: Elongation factor 1-gamma (440 aa).

An N-acetylalanine modification is found at A2. The 86-residue stretch at 2 to 87 (AAGTLYTYPE…YVSNEELRGS (86 aa)) folds into the GST N-terminal domain. Positions 88 to 216 (TPEAAAQVVQ…VKLCEKMAQF (129 aa)) constitute a GST C-terminal domain. N6-acetyllysine is present on residues K147 and K212. The segment covering 221-257 (FAESQPKKDTPRKEKGSREEKLKPQAERKEGKEEKKA) has biased composition (basic and acidic residues). Residues 221–267 (FAESQPKKDTPRKEKGSREEKLKPQAERKEGKEEKKAAAPAPEEELD) form a disordered region. K256 participates in a covalent cross-link: Glycyl lysine isopeptide (Lys-Gly) (interchain with G-Cter in SUMO1). The EF-1-gamma C-terminal domain occupies 279-440 (AKDPFAHLPK…KAFNQGKIFK (162 aa)). K288 participates in a covalent cross-link: Glycyl lysine isopeptide (Lys-Gly) (interchain with G-Cter in SUMO2). The residue at position 404 (K404) is an N6-acetyllysine. Position 437 is an N6-acetyllysine; alternate (K437). K437 is modified (N6-malonyllysine; alternate).

In terms of assembly, EF-1 is composed of four subunits: alpha, beta, delta, and gamma.

In terms of biological role, probably plays a role in anchoring the complex to other cellular components. The sequence is that of Elongation factor 1-gamma (EEF1G) from Bos taurus (Bovine).